The chain runs to 338 residues: L-serine dehydratase (338 aa).

Position 39 is an N6-(pyridoxal phosphate)lysine (Lys39).

Belongs to the serine/threonine dehydratase family. It depends on pyridoxal 5'-phosphate as a cofactor.

It is found in the cytoplasm. It catalyses the reaction L-serine = pyruvate + NH4(+). It functions in the pathway carbohydrate biosynthesis; gluconeogenesis. This Saccharomyces cerevisiae (strain RM11-1a) (Baker's yeast) protein is L-serine dehydratase (SDL1).